The following is a 117-amino-acid chain: cAMP-regulated phosphoprotein 19-B (117 aa).

Residues 1–37 show a composition bias toward basic and acidic residues; the sequence is MSRDNQEIKAPEESSAEEQKEMDDKVTSPEKAEEIKL. Residues 1 to 54 are disordered; it reads MSRDNQEIKAPEESSAEEQKEMDDKVTSPEKAEEIKLKSRYPNIGPKPGGSDFL. S28 bears the Phosphoserine; by CDK2 mark. A Phosphoserine; by GWL modification is found at S67. The tract at residues 77-117 is disordered; that stretch reads MKNKQLPTAAPDKTEVTGDHIPTPQDLPQRKPSLVASKLAG. T99 carries the post-translational modification Phosphothreonine; by CDK2. S109 carries the phosphoserine; by PKA modification.

It belongs to the endosulfine family. As to quaternary structure, interacts (when phosphorylated at Ser-67) with ppp2r2d. In terms of processing, phosphorylation at Ser-67 by gwl during mitosis is essential for interaction with ppp2r2d (PR55-delta) and subsequent inactivation of PP2A.

Its subcellular location is the cytoplasm. In terms of biological role, protein phosphatase inhibitor that specifically inhibits protein phosphatase 2A (PP2A) during mitosis. When phosphorylated at Ser-67 during mitosis, specifically interacts with ppp2r2d (PR55-delta) and inhibits its activity, leading to inactivation of PP2A, an essential condition to keep cyclin-B1-CDK1 activity high during M phase. This Xenopus laevis (African clawed frog) protein is cAMP-regulated phosphoprotein 19-B (arpp19-b).